Here is a 187-residue protein sequence, read N- to C-terminus: DNA-3-methyladenine glycosylase 1 (187 aa).

Zn(2+) contacts are provided by cysteine 4, histidine 17, histidine 175, and cysteine 179.

The catalysed reaction is Hydrolysis of alkylated DNA, releasing 3-methyladenine.. Activity is controlled by product inhibition. In terms of biological role, hydrolysis of the deoxyribose N-glycosidic bond to excise 3-methyladenine from the damaged DNA polymer formed by alkylation lesions. The protein is DNA-3-methyladenine glycosylase 1 of Escherichia coli (strain K12).